Here is a 245-residue protein sequence, read N- to C-terminus: Zinc finger CCCH domain-containing protein 54 (245 aa).

A C3H1-type zinc finger spans residues 92–119 (TYCAVACPAFRNGACHRGDSCEFAHGVF). Positions 175–204 (GNGDGVTMRMDDEGYDTSRSPVRSGKDDLD) are disordered.

In terms of assembly, interacts with MARD1/FLZ9 and RD21A. As to expression, specifically expressed in embryo (at protein level).

It localises to the nucleus. In terms of biological role, embryo-specific transcription factor required at the globular to heart stage transition in embryo development. This chain is Zinc finger CCCH domain-containing protein 54, found in Arabidopsis thaliana (Mouse-ear cress).